Reading from the N-terminus, the 267-residue chain is Proteasome subunit alpha (267 aa).

A disordered region spans residues 231–267 (ETLLQERDSKESAESEEPIESEEGKKTGKKSDADSSD). Basic and acidic residues-rich tracts occupy residues 234 to 243 (LQERDSKESA) and 252 to 267 (EEGK…DSSD).

It belongs to the peptidase T1A family. As to quaternary structure, the 20S proteasome core is composed of 14 alpha and 14 beta subunits that assemble into four stacked heptameric rings, resulting in a barrel-shaped structure. The two inner rings, each composed of seven catalytic beta subunits, are sandwiched by two outer rings, each composed of seven alpha subunits. The catalytic chamber with the active sites is on the inside of the barrel. Has a gated structure, the ends of the cylinder being occluded by the N-termini of the alpha-subunits. Is capped by the proteasome-associated ATPase, ARC.

It is found in the cytoplasm. The protein operates within protein degradation; proteasomal Pup-dependent pathway. With respect to regulation, the formation of the proteasomal ATPase ARC-20S proteasome complex, likely via the docking of the C-termini of ARC into the intersubunit pockets in the alpha-rings, may trigger opening of the gate for substrate entry. Interconversion between the open-gate and close-gate conformations leads to a dynamic regulation of the 20S proteasome proteolysis activity. Functionally, component of the proteasome core, a large protease complex with broad specificity involved in protein degradation. This chain is Proteasome subunit alpha, found in Mycobacterium ulcerans (strain Agy99).